Reading from the N-terminus, the 117-residue chain is Large ribosomal subunit protein bL19 (117 aa).

The protein belongs to the bacterial ribosomal protein bL19 family.

Functionally, this protein is located at the 30S-50S ribosomal subunit interface and may play a role in the structure and function of the aminoacyl-tRNA binding site. The sequence is that of Large ribosomal subunit protein bL19 from Leptothrix cholodnii (strain ATCC 51168 / LMG 8142 / SP-6) (Leptothrix discophora (strain SP-6)).